Reading from the N-terminus, the 143-residue chain is General odorant-binding protein 28a (143 aa).

The N-terminal stretch at 1 to 21 is a signal peptide; the sequence is MQSTPIILVAIVLLGAALVRA. 3 cysteine pairs are disulfide-bonded: Cys38–Cys69, Cys65–Cys123, and Cys113–Cys132.

Expressed in antenna, mostly on the medial and posterior surface of the third antennal segment.

It is found in the secreted. In Drosophila melanogaster (Fruit fly), this protein is General odorant-binding protein 28a (Obp28a).